The following is a 133-amino-acid chain: Small ribosomal subunit protein uS8 (133 aa).

The protein belongs to the universal ribosomal protein uS8 family. As to quaternary structure, part of the 30S ribosomal subunit. Contacts proteins S5 and S12.

In terms of biological role, one of the primary rRNA binding proteins, it binds directly to 16S rRNA central domain where it helps coordinate assembly of the platform of the 30S subunit. The sequence is that of Small ribosomal subunit protein uS8 from Syntrophus aciditrophicus (strain SB).